The sequence spans 393 residues: MSVSFTRSFPRAFIRSYGTVQSSPTAASFASRIPPALQEAVAATAPRTNWTRDEVQQIYETPLNQLTYAAAAVHRRFHDPSAIQMCTLMNIKTGGCSEDCSYCAQSSRYSTGLKATKMSPVDDVLEKARIAKANGSTRFCMGAAWRDMRGRKTSLKNVKQMVSGVREMGMEVCVTLGMIDADQAKELKDAGLTAYNHNLDTSREFYPTIITTRSYDERLKTLSHVRDAGINVCSGGILGLGEADSDRIGLIHTVSSLPSHPESFPVNALVPIKGTPLGDRKMISFDKLLRTVATARIVLPATIVRLAAGRISLTEEQQVACFMAGANAVFTGEKMLTTDCNGWDEDRAMFDRWGFYPMRSFEKETNAATPQQHVDSVAHESEKNPAAPAAEAL.

A mitochondrion-targeting transit peptide spans 1–20 (MSVSFTRSFPRAFIRSYGTV). The Radical SAM core domain occupies 81–310 (SAIQMCTLMN…ATIVRLAAGR (230 aa)). [4Fe-4S] cluster contacts are provided by C96, C100, and C103. 4 residues coordinate [2Fe-2S] cluster: C140, C173, C233, and R305. The tract at residues 366–393 (NAATPQQHVDSVAHESEKNPAAPAAEAL) is disordered.

The protein belongs to the radical SAM superfamily. Biotin synthase family. [4Fe-4S] cluster serves as cofactor. [2Fe-2S] cluster is required as a cofactor.

The protein resides in the mitochondrion. It catalyses the reaction (4R,5S)-dethiobiotin + (sulfur carrier)-SH + 2 reduced [2Fe-2S]-[ferredoxin] + 2 S-adenosyl-L-methionine = (sulfur carrier)-H + biotin + 2 5'-deoxyadenosine + 2 L-methionine + 2 oxidized [2Fe-2S]-[ferredoxin]. It functions in the pathway cofactor biosynthesis; biotin biosynthesis; biotin from 7,8-diaminononanoate: step 2/2. In terms of biological role, biotin synthase; part of the cluster involved in the biosynthesis of biotin (also known as vitamin B8 or vitamin H), a water-soluble vitamin that functions as a prosthetic group of many carboxylases, such as acetyl-CoA carboxylase and pyruvate carboxylase. Catalyzes the conversion of dethiobiotin (DTB) to biotin by the insertion of a sulfur atom into dethiobiotin via a radical-based mechanism. The sequence is that of Biotin synthase, mitochondrial from Emericella nidulans (strain FGSC A4 / ATCC 38163 / CBS 112.46 / NRRL 194 / M139) (Aspergillus nidulans).